We begin with the raw amino-acid sequence, 410 residues long: Alanine racemase (410 aa).

The RPE1 insert domain occupies 28–76 (VDFLHNVANKEEFAGNTSPRTAAYTLVREDASLGSTPKLPLGASYAKNL). The active-site Proton acceptor; specific for D-alanine is the Lys83. Lys83 carries the N6-(pyridoxal phosphate)lysine modification. Position 182 (Arg182) interacts with substrate. Residue Tyr305 is the Proton acceptor; specific for L-alanine of the active site. Substrate is bound at residue Met353.

This sequence belongs to the alanine racemase family. Pyridoxal 5'-phosphate is required as a cofactor.

The enzyme catalyses L-alanine = D-alanine. The protein operates within amino-acid biosynthesis; D-alanine biosynthesis; D-alanine from L-alanine: step 1/1. In terms of biological role, catalyzes the interconversion of L-alanine and D-alanine. May also act on other amino acids. This chain is Alanine racemase (alr), found in Rickettsia bellii (strain RML369-C).